The primary structure comprises 353 residues: MNNLLDFTLEELKAWMKENGESAFRGQQILSWIYKGVKEFDNMKNIPKPLVQKLKENFFVGLPKIIEVYKSNIDGTEKFLLGFKDGNLIESVLMRYKHGNSICISTQVGCAMGCKFCASTIEGKVRNLTTGEILSQIMVVQDYINERISNVVLMGSGEPLDNYNNVIKFLEIVSAEYALNIGQRHITLSTCGIVPKIYELADKELSITLALSLHAFSNDKRKEIMPIANRYSIEEILEACRYYINKTNRRITFEYALVKDVNDGREDAKALGKLLKGMLCHVNLIPVNEIKENTYKRSSKKAIEDFSEILKNHGIEVTTRREMGSDINAACGQLRRSYINTQEIEGEQNGRFS.

The active-site Proton acceptor is Glu-90. The Radical SAM core domain occupies 96-326 (YKHGNSICIS…VTTRREMGSD (231 aa)). Cys-103 and Cys-331 are joined by a disulfide. Residues Cys-110, Cys-114, and Cys-117 each coordinate [4Fe-4S] cluster. S-adenosyl-L-methionine contacts are provided by residues 157–158 (GE), Ser-189, 212–214 (SLH), and Asn-288. Catalysis depends on Cys-331, which acts as the S-methylcysteine intermediate.

It belongs to the radical SAM superfamily. RlmN family. [4Fe-4S] cluster is required as a cofactor.

It localises to the cytoplasm. The enzyme catalyses adenosine(2503) in 23S rRNA + 2 reduced [2Fe-2S]-[ferredoxin] + 2 S-adenosyl-L-methionine = 2-methyladenosine(2503) in 23S rRNA + 5'-deoxyadenosine + L-methionine + 2 oxidized [2Fe-2S]-[ferredoxin] + S-adenosyl-L-homocysteine. The catalysed reaction is adenosine(37) in tRNA + 2 reduced [2Fe-2S]-[ferredoxin] + 2 S-adenosyl-L-methionine = 2-methyladenosine(37) in tRNA + 5'-deoxyadenosine + L-methionine + 2 oxidized [2Fe-2S]-[ferredoxin] + S-adenosyl-L-homocysteine. Functionally, specifically methylates position 2 of adenine 2503 in 23S rRNA and position 2 of adenine 37 in tRNAs. The protein is Probable dual-specificity RNA methyltransferase RlmN of Clostridium beijerinckii (strain ATCC 51743 / NCIMB 8052) (Clostridium acetobutylicum).